The following is a 1016-amino-acid chain: Formate dehydrogenase-O major subunit (1016 aa).

Positions 1–33 (MQVSRRQFFKICAGGMAGTTAAALGFAPSVALA) form a signal peptide, tat-type signal. The 4Fe-4S Mo/W bis-MGD-type domain occupies 43-106 (TRETRNTCTY…GLVDFIHSES (64 aa)). Residues C50, C53, C57, and C92 each coordinate [4Fe-4S] cluster. U196 is a non-standard amino acid (selenocysteine).

This sequence belongs to the prokaryotic molybdopterin-containing oxidoreductase family. As to quaternary structure, formate dehydrogenase is a membrane-bound complex, formed by subunits alpha, beta and gamma. The cofactor is Mo-bis(molybdopterin guanine dinucleotide). [4Fe-4S] cluster is required as a cofactor. Exported by the Tat system. The position of the signal peptide cleavage has not been experimentally proven.

It is found in the periplasm. The catalysed reaction is formate + NAD(+) = CO2 + NADH. Functionally, allows to use formate as major electron donor during aerobic respiration. Subunit alpha possibly forms the active site. The sequence is that of Formate dehydrogenase-O major subunit (fdoG) from Escherichia coli (strain K12).